The chain runs to 459 residues: Putrescine aminotransferase (459 aa).

Pyridoxal 5'-phosphate-binding positions include 150 to 151 (GT) and Q274. K300 is modified (N6-(pyridoxal phosphate)lysine). T332 contributes to the pyridoxal 5'-phosphate binding site.

Belongs to the class-III pyridoxal-phosphate-dependent aminotransferase family. Putrescine aminotransferase subfamily. Pyridoxal 5'-phosphate serves as cofactor.

The catalysed reaction is an alkane-alpha,omega-diamine + 2-oxoglutarate = an omega-aminoaldehyde + L-glutamate. It carries out the reaction putrescine + 2-oxoglutarate = 1-pyrroline + L-glutamate + H2O. The enzyme catalyses cadaverine + 2-oxoglutarate = 5-aminopentanal + L-glutamate. It functions in the pathway amine and polyamine degradation; putrescine degradation; 4-aminobutanal from putrescine (transaminase route): step 1/1. Functionally, catalyzes the aminotransferase reaction from putrescine to 2-oxoglutarate, leading to glutamate and 4-aminobutanal, which spontaneously cyclizes to form 1-pyrroline. This is the first step in one of two pathways for putrescine degradation, where putrescine is converted into 4-aminobutanoate (gamma-aminobutyrate or GABA) via 4-aminobutanal. Also functions as a cadaverine transaminase in a a L-lysine degradation pathway to succinate that proceeds via cadaverine, glutarate and L-2-hydroxyglutarate. The chain is Putrescine aminotransferase from Salmonella dublin (strain CT_02021853).